We begin with the raw amino-acid sequence, 433 residues long: Protein MTH1 (433 aa).

Residues 1–117 (MFVSPPPATS…SRRSSVAESG (117 aa)) form a disordered region. Residues 9 to 47 (TSKNQVLQRRPLESTNSNHGFASSLQAIPENTMSGSDNA) show a composition bias toward polar residues. Positions 48–64 (SFQSLPLSMSSSQSTTS) are enriched in low complexity. Residues 77–87 (YTDRARDEIKK) show a composition bias toward basic and acidic residues.

The protein to yeast STD1/MSN3.

This chain is Protein MTH1 (MTH1), found in Saccharomyces cerevisiae (strain ATCC 204508 / S288c) (Baker's yeast).